Reading from the N-terminus, the 150-residue chain is Large ribosomal subunit protein bL9 (150 aa).

Belongs to the bacterial ribosomal protein bL9 family.

In terms of biological role, binds to the 23S rRNA. The protein is Large ribosomal subunit protein bL9 of Polynucleobacter asymbioticus (strain DSM 18221 / CIP 109841 / QLW-P1DMWA-1) (Polynucleobacter necessarius subsp. asymbioticus).